Here is a 1178-residue protein sequence, read N- to C-terminus: Integrin alpha-2 (1178 aa).

The N-terminal stretch at 1–26 is a signal peptide; it reads MGPGQAGGALLLRLLMLVQGILNCLA. Residues 27–1129 are Extracellular-facing; it reads YNVGLPGAKI…KPTEKAEVPT (1103 aa). 2 FG-GAP repeats span residues 31–89 and 98–158; these read LPGA…TATC and ASIS…FLTS. A disulfide bridge connects residues Cys-80 and Cys-89. N-linked (GlcNAc...) asparagine glycans are attached at residues Asn-102 and Asn-109. One can recognise a VWFA domain in the interval 185-362; sequence WEAVKNFLVK…TLGEQIFSIE (178 aa). FG-GAP repeat units lie at residues 363 to 417, 420 to 472, 474 to 536, 537 to 595, and 601 to 661; these read GTVQ…VIFP, AFDQ…KQGN, TVIQ…ILNQ, HQFL…TIRT, and ILGS…FTPD. N-linked (GlcNAc...) asparagine glycosylation is found at Asn-429, Asn-457, and Asn-472. The short motif at 480–482 is the Cell attachment site element; sequence RGD. Ca(2+) contacts are provided by Asp-496, Asp-498, Asp-500, Asp-504, Asp-560, Asn-562, Asp-564, Asp-568, Asp-624, Asn-626, Asp-628, and Asp-632. Intrachain disulfides connect Cys-677–Cys-734, Cys-786–Cys-792, Cys-862–Cys-873, Cys-1016–Cys-1047, and Cys-1052–Cys-1057. N-linked (GlcNAc...) asparagine glycosylation occurs at Asn-696. N-linked (GlcNAc...) asparagine glycans are attached at residues Asn-1054, Asn-1071, and Asn-1078. The helical transmembrane segment at 1130 to 1151 threads the bilayer; it reads GVIIGSIIAGILLLLAMTAGLW. The Cytoplasmic portion of the chain corresponds to 1152–1178; sequence KLGFFKRQYKKMGQNPDEMDETTELNS. Positions 1154–1158 match the GFFKR motif motif; it reads GFFKR.

The protein belongs to the integrin alpha chain family. As to quaternary structure, heterodimer of an alpha and a beta subunit. Alpha-2 associates with beta-1. Interacts with HPS5 and RAB21.

It is found in the membrane. Integrin alpha-2/beta-1 is a collagen receptor, being responsible for adhesion of platelets and other cells to collagens, modulation of collagen and collagenase gene expression, force generation and organization of newly synthesized extracellular matrix. It is also a receptor for laminins, collagen C-propeptides and E-cadherin. Mice homozygous for a null mutation in the alpha-2 die very early in embryogenesis. This is Integrin alpha-2 (Itga2) from Mus musculus (Mouse).